Consider the following 405-residue polypeptide: Argininosuccinate synthase (405 aa).

Position 8 to 16 (8 to 16 (AYSGGLDTS)) interacts with ATP. Tyr-86 and Ser-91 together coordinate L-citrulline. Residue Gly-116 coordinates ATP. Residues Thr-118, Asn-122, and Asp-123 each coordinate L-aspartate. Asn-122 is a binding site for L-citrulline. L-citrulline is bound by residues Arg-126, Ser-175, Ser-184, Glu-260, and Tyr-272.

This sequence belongs to the argininosuccinate synthase family. Type 1 subfamily. In terms of assembly, homotetramer.

The protein localises to the cytoplasm. The catalysed reaction is L-citrulline + L-aspartate + ATP = 2-(N(omega)-L-arginino)succinate + AMP + diphosphate + H(+). The protein operates within amino-acid biosynthesis; L-arginine biosynthesis; L-arginine from L-ornithine and carbamoyl phosphate: step 2/3. The chain is Argininosuccinate synthase from Koribacter versatilis (strain Ellin345).